Consider the following 286-residue polypeptide: 4-hydroxy-3-methylbut-2-enyl diphosphate reductase (286 aa).

Cys-12 serves as a coordination point for [4Fe-4S] cluster. His-46 and His-79 together coordinate (2E)-4-hydroxy-3-methylbut-2-enyl diphosphate. 2 residues coordinate dimethylallyl diphosphate: His-46 and His-79. Isopentenyl diphosphate is bound by residues His-46 and His-79. Cys-101 is a [4Fe-4S] cluster binding site. Position 129 (His-129) interacts with (2E)-4-hydroxy-3-methylbut-2-enyl diphosphate. Residue His-129 coordinates dimethylallyl diphosphate. His-129 contributes to the isopentenyl diphosphate binding site. The active-site Proton donor is the Glu-131. Position 169 (Thr-169) interacts with (2E)-4-hydroxy-3-methylbut-2-enyl diphosphate. Residue Cys-198 coordinates [4Fe-4S] cluster. Positions 226, 228, and 270 each coordinate (2E)-4-hydroxy-3-methylbut-2-enyl diphosphate. Positions 226, 228, and 270 each coordinate dimethylallyl diphosphate. Isopentenyl diphosphate is bound by residues Ser-226, Asn-228, and Ser-270.

The protein belongs to the IspH family. [4Fe-4S] cluster serves as cofactor.

It carries out the reaction isopentenyl diphosphate + 2 oxidized [2Fe-2S]-[ferredoxin] + H2O = (2E)-4-hydroxy-3-methylbut-2-enyl diphosphate + 2 reduced [2Fe-2S]-[ferredoxin] + 2 H(+). It catalyses the reaction dimethylallyl diphosphate + 2 oxidized [2Fe-2S]-[ferredoxin] + H2O = (2E)-4-hydroxy-3-methylbut-2-enyl diphosphate + 2 reduced [2Fe-2S]-[ferredoxin] + 2 H(+). It participates in isoprenoid biosynthesis; dimethylallyl diphosphate biosynthesis; dimethylallyl diphosphate from (2E)-4-hydroxy-3-methylbutenyl diphosphate: step 1/1. It functions in the pathway isoprenoid biosynthesis; isopentenyl diphosphate biosynthesis via DXP pathway; isopentenyl diphosphate from 1-deoxy-D-xylulose 5-phosphate: step 6/6. Functionally, catalyzes the conversion of 1-hydroxy-2-methyl-2-(E)-butenyl 4-diphosphate (HMBPP) into a mixture of isopentenyl diphosphate (IPP) and dimethylallyl diphosphate (DMAPP). Acts in the terminal step of the DOXP/MEP pathway for isoprenoid precursor biosynthesis. The protein is 4-hydroxy-3-methylbut-2-enyl diphosphate reductase of Solidesulfovibrio magneticus (strain ATCC 700980 / DSM 13731 / RS-1) (Desulfovibrio magneticus).